Reading from the N-terminus, the 111-residue chain is MKRRSVCVGDTVYVLAGNDKGKQGKVLRCLKDKVVVEGINVRVKNIKRSQENPKGKRINIEAPLHISNVRLSIDNQPARLFVKVREKGRELWNKHSDGSSSLYRSVRERKG.

It belongs to the universal ribosomal protein uL24 family. As to quaternary structure, part of the 50S ribosomal subunit.

One of two assembly initiator proteins, it binds directly to the 5'-end of the 23S rRNA, where it nucleates assembly of the 50S subunit. In terms of biological role, one of the proteins that surrounds the polypeptide exit tunnel on the outside of the subunit. This is Large ribosomal subunit protein uL24 from Chlamydia trachomatis serovar A (strain ATCC VR-571B / DSM 19440 / HAR-13).